A 175-amino-acid chain; its full sequence is ATP synthase subunit b (175 aa).

A helical membrane pass occupies residues 20-40 (LIFWTAVTFVIVLLILKQLAW).

It belongs to the ATPase B chain family. In terms of assembly, F-type ATPases have 2 components, F(1) - the catalytic core - and F(0) - the membrane proton channel. F(1) has five subunits: alpha(3), beta(3), gamma(1), delta(1), epsilon(1). F(0) has four main subunits: a(1), b(2) and c(10-14). The alpha and beta chains form an alternating ring which encloses part of the gamma chain. F(1) is attached to F(0) by a central stalk formed by the gamma and epsilon chains, while a peripheral stalk is formed by the delta and b chains.

It is found in the cell inner membrane. In terms of biological role, f(1)F(0) ATP synthase produces ATP from ADP in the presence of a proton or sodium gradient. F-type ATPases consist of two structural domains, F(1) containing the extramembraneous catalytic core and F(0) containing the membrane proton channel, linked together by a central stalk and a peripheral stalk. During catalysis, ATP synthesis in the catalytic domain of F(1) is coupled via a rotary mechanism of the central stalk subunits to proton translocation. Component of the F(0) channel, it forms part of the peripheral stalk, linking F(1) to F(0). This chain is ATP synthase subunit b, found in Chlorobium limicola (strain DSM 245 / NBRC 103803 / 6330).